The chain runs to 411 residues: LL-diaminopimelate aminotransferase (411 aa).

Positions 15 and 42 each coordinate substrate. Residues tyrosine 72, 108 to 109 (SK), tyrosine 132, asparagine 187, tyrosine 218, and 246 to 248 (SFS) each bind pyridoxal 5'-phosphate. Positions 109, 132, and 187 each coordinate substrate. At lysine 249 the chain carries N6-(pyridoxal phosphate)lysine. Residues arginine 257 and asparagine 292 each contribute to the pyridoxal 5'-phosphate site. Residues asparagine 292 and arginine 388 each contribute to the substrate site.

It belongs to the class-I pyridoxal-phosphate-dependent aminotransferase family. LL-diaminopimelate aminotransferase subfamily. In terms of assembly, homodimer. Requires pyridoxal 5'-phosphate as cofactor.

It catalyses the reaction (2S,6S)-2,6-diaminopimelate + 2-oxoglutarate = (S)-2,3,4,5-tetrahydrodipicolinate + L-glutamate + H2O + H(+). It functions in the pathway amino-acid biosynthesis; L-lysine biosynthesis via DAP pathway; LL-2,6-diaminopimelate from (S)-tetrahydrodipicolinate (aminotransferase route): step 1/1. Functionally, involved in the synthesis of meso-diaminopimelate (m-DAP or DL-DAP), required for both lysine and peptidoglycan biosynthesis. Catalyzes the direct conversion of tetrahydrodipicolinate to LL-diaminopimelate. The polypeptide is LL-diaminopimelate aminotransferase (Nostoc punctiforme (strain ATCC 29133 / PCC 73102)).